The chain runs to 293 residues: Signal recognition particle receptor FtsY (293 aa).

GTP-binding positions include 93-100 (GVNGAGKT), 175-179 (DTAGR), and 239-242 (TKLD).

It belongs to the GTP-binding SRP family. FtsY subfamily. In terms of assembly, part of the signal recognition particle protein translocation system, which is composed of SRP and FtsY. SRP is a ribonucleoprotein composed of Ffh and a 4.5S RNA molecule.

The protein localises to the cell inner membrane. Its subcellular location is the cytoplasm. The enzyme catalyses GTP + H2O = GDP + phosphate + H(+). Involved in targeting and insertion of nascent membrane proteins into the cytoplasmic membrane. Acts as a receptor for the complex formed by the signal recognition particle (SRP) and the ribosome-nascent chain (RNC). Interaction with SRP-RNC leads to the transfer of the RNC complex to the Sec translocase for insertion into the membrane, the hydrolysis of GTP by both Ffh and FtsY, and the dissociation of the SRP-FtsY complex into the individual components. In Helicobacter pylori (strain ATCC 700392 / 26695) (Campylobacter pylori), this protein is Signal recognition particle receptor FtsY.